The following is a 282-amino-acid chain: Ermin (282 aa).

Polar residues-rich tracts occupy residues 1–12 (MTDTPVTLSGSE) and 21–30 (NGQQPSSQTR). The interval 1–71 (MTDTPVTLSG…NSKGNVLPRG (71 aa)) is disordered. Residues S72, S212, S224, S228, and S231 each carry the phosphoserine modification. Residues 212-224 (SPLKEESLAREDS) are compositionally biased toward basic and acidic residues. The tract at residues 212 to 246 (SPLKEESLAREDSPLSSPSSQPGTPDEQLVLGKKG) is disordered. The segment covering 225 to 234 (PLSSPSSQPG) has biased composition (polar residues). T235 bears the Phosphothreonine mark. A binds actin region spans residues 263–282 (KIRKGNTKQRIDEFESMMHL).

In terms of assembly, binds actin. In terms of tissue distribution, expressed specifically by the oligodendrocytes. Highest expression seen in the spinal cord followed by brainstem, cerebellum, thalamus, and hypothalamus. In the myelin sheath, found mainly in the abaxon and the lateral few terminal loops. Its apposition to the myelinated axon, through the latter, defines an axonal subregion, termed juxtanode, at the Ranvier node-paranode junction.

It localises to the cytoplasm. Its subcellular location is the cytoskeleton. Functionally, plays a role in cytoskeletal rearrangements during the late wrapping and/or compaction phases of myelinogenesis as well as in maintenance and stability of myelin sheath in the adult. May play an important role in late-stage oligodendroglia maturation, myelin/Ranvier node formation during CNS development, and in the maintenance and plasticity of related structures in the mature CNS. The sequence is that of Ermin (Ermn) from Rattus norvegicus (Rat).